We begin with the raw amino-acid sequence, 633 residues long: Phosphomethylpyrimidine synthase (633 aa).

Substrate-binding positions include N245, M274, Y303, H339, 359-361, 400-403, and E439; these read SRG and DGLR. Residue H443 participates in Zn(2+) binding. Position 466 (Y466) interacts with substrate. Residue H507 participates in Zn(2+) binding. Positions 587, 590, and 595 each coordinate [4Fe-4S] cluster.

Belongs to the ThiC family. In terms of assembly, homodimer. [4Fe-4S] cluster is required as a cofactor.

It carries out the reaction 5-amino-1-(5-phospho-beta-D-ribosyl)imidazole + S-adenosyl-L-methionine = 4-amino-2-methyl-5-(phosphooxymethyl)pyrimidine + CO + 5'-deoxyadenosine + formate + L-methionine + 3 H(+). The protein operates within cofactor biosynthesis; thiamine diphosphate biosynthesis. In terms of biological role, catalyzes the synthesis of the hydroxymethylpyrimidine phosphate (HMP-P) moiety of thiamine from aminoimidazole ribotide (AIR) in a radical S-adenosyl-L-methionine (SAM)-dependent reaction. This is Phosphomethylpyrimidine synthase from Neisseria meningitidis serogroup B (strain ATCC BAA-335 / MC58).